The chain runs to 256 residues: Thiazole synthase (256 aa).

The Schiff-base intermediate with DXP role is filled by K95. 1-deoxy-D-xylulose 5-phosphate-binding positions include G156, 182-183 (AG), and 204-205 (NT).

It belongs to the ThiG family. In terms of assembly, homotetramer. Forms heterodimers with either ThiH or ThiS.

It localises to the cytoplasm. It carries out the reaction [ThiS sulfur-carrier protein]-C-terminal-Gly-aminoethanethioate + 2-iminoacetate + 1-deoxy-D-xylulose 5-phosphate = [ThiS sulfur-carrier protein]-C-terminal Gly-Gly + 2-[(2R,5Z)-2-carboxy-4-methylthiazol-5(2H)-ylidene]ethyl phosphate + 2 H2O + H(+). It functions in the pathway cofactor biosynthesis; thiamine diphosphate biosynthesis. Catalyzes the rearrangement of 1-deoxy-D-xylulose 5-phosphate (DXP) to produce the thiazole phosphate moiety of thiamine. Sulfur is provided by the thiocarboxylate moiety of the carrier protein ThiS. In vitro, sulfur can be provided by H(2)S. The sequence is that of Thiazole synthase from Shigella dysenteriae serotype 1 (strain Sd197).